Here is a 255-residue protein sequence, read N- to C-terminus: Imidazole glycerol phosphate synthase subunit HisF (255 aa).

Residues Asp12 and Asp131 contribute to the active site.

It belongs to the HisA/HisF family. Heterodimer of HisH and HisF.

The protein localises to the cytoplasm. It carries out the reaction 5-[(5-phospho-1-deoxy-D-ribulos-1-ylimino)methylamino]-1-(5-phospho-beta-D-ribosyl)imidazole-4-carboxamide + L-glutamine = D-erythro-1-(imidazol-4-yl)glycerol 3-phosphate + 5-amino-1-(5-phospho-beta-D-ribosyl)imidazole-4-carboxamide + L-glutamate + H(+). Its pathway is amino-acid biosynthesis; L-histidine biosynthesis; L-histidine from 5-phospho-alpha-D-ribose 1-diphosphate: step 5/9. In terms of biological role, IGPS catalyzes the conversion of PRFAR and glutamine to IGP, AICAR and glutamate. The HisF subunit catalyzes the cyclization activity that produces IGP and AICAR from PRFAR using the ammonia provided by the HisH subunit. The polypeptide is Imidazole glycerol phosphate synthase subunit HisF (Vesicomyosocius okutanii subsp. Calyptogena okutanii (strain HA)).